Here is a 319-residue protein sequence, read N- to C-terminus: Ankyrin repeat domain-containing protein 1 (319 aa).

Positions 63 to 89 (EKQLEAELKKKKLEQRSKLENLEDLEI) form a coiled coil. ANK repeat units follow at residues 152–181 (YKRT…QIEF), 185–214 (LEST…KISA), 218–247 (LLST…DLNA), 251–280 (EGDT…DLTI), and 284–315 (AGKT…KTSR).

In terms of assembly, interacts with TTN/titin and YBX1.

Its subcellular location is the nucleus. May play an important role in endothelial cell activation. May act as a nuclear transcription factor that negatively regulates the expression of cardiac genes. The sequence is that of Ankyrin repeat domain-containing protein 1 (ANKRD1) from Oryctolagus cuniculus (Rabbit).